The chain runs to 354 residues: Hyaluronan and proteoglycan link protein 1 (354 aa).

Positions 1–15 (MKSLLLLVLISICGA) are excised as a propeptide. 2 N-linked (GlcNAc...) asparagine glycosylation sites follow: Asn21 and Asn56. Positions 38 to 152 (PRLLVEAEQA…EGLEDDTAVV (115 aa)) constitute an Ig-like V-type domain. 5 cysteine pairs are disulfide-bonded: Cys61-Cys139, Cys181-Cys252, Cys205-Cys226, Cys279-Cys349, and Cys304-Cys325. Link domains are found at residues 159–254 (VVFP…FCFT) and 259–351 (GRFY…YCFR).

The protein belongs to the HAPLN family.

The protein localises to the secreted. The protein resides in the extracellular space. It is found in the extracellular matrix. Functionally, stabilizes the aggregates of proteoglycan monomers with hyaluronic acid in the extracellular cartilage matrix. The sequence is that of Hyaluronan and proteoglycan link protein 1 (HAPLN1) from Equus caballus (Horse).